Consider the following 636-residue polypeptide: Capsid vertex component 2 (636 aa).

The interval 1–48 (MSLLHTFWRLPVAVFFEPHEENVLRCPERVLRRLLEDAAVAMRGGGWR) is interaction with major capsid protein/MCP. Residues 97-125 (DEGPSPRTLLQPPCRPRSSSPGTGVAGAS) form a disordered region.

This sequence belongs to the herpesviridae CVC2 protein family. As to quaternary structure, heterodimerizes with CVC1. Interacts with major capsid protein/MCP and triplex capsid protein 1/TRX1 at the pentamer vertices. Interacts with the large tegument protein/LTP.

The protein resides in the virion. It is found in the host nucleus. Capsid vertex-specific component that plays a role during viral DNA encapsidation, assuring correct genome cleavage and presumably stabilizing capsids that contain full-length viral genomes. Participates in the interaction between the capsid and the tegument through interaction with the large tegument protein/LTP. The sequence is that of Capsid vertex component 2 from Homo sapiens (Human).